The following is a 125-amino-acid chain: Ribonuclease P protein component (125 aa).

It belongs to the RnpA family. Consists of a catalytic RNA component (M1 or rnpB) and a protein subunit.

The enzyme catalyses Endonucleolytic cleavage of RNA, removing 5'-extranucleotides from tRNA precursor.. In terms of biological role, RNaseP catalyzes the removal of the 5'-leader sequence from pre-tRNA to produce the mature 5'-terminus. It can also cleave other RNA substrates such as 4.5S RNA. The protein component plays an auxiliary but essential role in vivo by binding to the 5'-leader sequence and broadening the substrate specificity of the ribozyme. This Idiomarina loihiensis (strain ATCC BAA-735 / DSM 15497 / L2-TR) protein is Ribonuclease P protein component.